The primary structure comprises 444 residues: Glycogen synthase (444 aa).

R15 contacts ADP-alpha-D-glucose.

The protein belongs to the glycosyltransferase 1 family. Bacterial/plant glycogen synthase subfamily.

The enzyme catalyses [(1-&gt;4)-alpha-D-glucosyl](n) + ADP-alpha-D-glucose = [(1-&gt;4)-alpha-D-glucosyl](n+1) + ADP + H(+). It functions in the pathway glycan biosynthesis; glycogen biosynthesis. Synthesizes alpha-1,4-glucan chains using ADP-glucose. This chain is Glycogen synthase, found in Deinococcus radiodurans (strain ATCC 13939 / DSM 20539 / JCM 16871 / CCUG 27074 / LMG 4051 / NBRC 15346 / NCIMB 9279 / VKM B-1422 / R1).